We begin with the raw amino-acid sequence, 761 residues long: 5-methyltetrahydropteroyltriglutamate--homocysteine methyltransferase (761 aa).

Residues 16 to 19 and Lys116 contribute to the 5-methyltetrahydropteroyltri-L-glutamate site; that span reads RELK. L-homocysteine is bound by residues 437–439 and Glu490; that span reads IGS. L-methionine is bound by residues 437-439 and Glu490; that span reads IGS. 5-methyltetrahydropteroyltri-L-glutamate contacts are provided by residues 521–522 and Trp567; that span reads RC. An L-homocysteine-binding site is contributed by Asp605. Residue Asp605 participates in L-methionine binding. Glu611 lines the 5-methyltetrahydropteroyltri-L-glutamate pocket. Residues His647, Cys649, and Glu671 each coordinate Zn(2+). Catalysis depends on His700, which acts as the Proton donor. Cys732 lines the Zn(2+) pocket.

The protein belongs to the vitamin-B12 independent methionine synthase family. Zn(2+) is required as a cofactor.

It catalyses the reaction 5-methyltetrahydropteroyltri-L-glutamate + L-homocysteine = tetrahydropteroyltri-L-glutamate + L-methionine. It functions in the pathway amino-acid biosynthesis; L-methionine biosynthesis via de novo pathway; L-methionine from L-homocysteine (MetE route): step 1/1. In terms of biological role, catalyzes the transfer of a methyl group from 5-methyltetrahydrofolate to homocysteine resulting in methionine formation. The chain is 5-methyltetrahydropteroyltriglutamate--homocysteine methyltransferase from Chromohalobacter salexigens (strain ATCC BAA-138 / DSM 3043 / CIP 106854 / NCIMB 13768 / 1H11).